Here is a 99-residue protein sequence, read N- to C-terminus: Malonate decarboxylase acyl carrier protein (99 aa).

Residue serine 25 is modified to O-(phosphoribosyl dephospho-coenzyme A)serine.

Belongs to the MdcC family. Post-translationally, covalently binds the prosthetic group of malonate decarboxylase.

It is found in the cytoplasm. In terms of biological role, subunit of malonate decarboxylase, it is an acyl carrier protein to which acetyl and malonyl thioester residues are bound via a 2'-(5''-phosphoribosyl)-3'-dephospho-CoA prosthetic group and turn over during the catalytic mechanism. This is Malonate decarboxylase acyl carrier protein from Pseudomonas putida (strain W619).